A 401-amino-acid chain; its full sequence is 1-deoxy-D-xylulose 5-phosphate reductoisomerase (401 aa).

Residues T10, G11, S12, I13, G36, R37, N38, and N124 each contribute to the NADPH site. Residue K125 coordinates 1-deoxy-D-xylulose 5-phosphate. Position 126 (E126) interacts with NADPH. D150 contacts Mn(2+). Residues S151, E152, S176, and H199 each contribute to the 1-deoxy-D-xylulose 5-phosphate site. E152 lines the Mn(2+) pocket. Residue G205 participates in NADPH binding. S212, N217, K218, and E221 together coordinate 1-deoxy-D-xylulose 5-phosphate. Residue E221 coordinates Mn(2+).

The protein belongs to the DXR family. Requires Mg(2+) as cofactor. Mn(2+) is required as a cofactor.

The catalysed reaction is 2-C-methyl-D-erythritol 4-phosphate + NADP(+) = 1-deoxy-D-xylulose 5-phosphate + NADPH + H(+). The protein operates within isoprenoid biosynthesis; isopentenyl diphosphate biosynthesis via DXP pathway; isopentenyl diphosphate from 1-deoxy-D-xylulose 5-phosphate: step 1/6. Catalyzes the NADPH-dependent rearrangement and reduction of 1-deoxy-D-xylulose-5-phosphate (DXP) to 2-C-methyl-D-erythritol 4-phosphate (MEP). The protein is 1-deoxy-D-xylulose 5-phosphate reductoisomerase of Acaryochloris marina (strain MBIC 11017).